We begin with the raw amino-acid sequence, 90 residues long: MQRIIFCEYEQRDTEGLDFVPYPGELGQKIFACIGKVGWAAWLVHQTMLINENRLSPRNPSHRAFLEEELNKFLFERRVAKPEGYIEPDA.

The protein belongs to the Fe(2+)-trafficking protein family.

Its function is as follows. Could be a mediator in iron transactions between iron acquisition and iron-requiring processes, such as synthesis and/or repair of Fe-S clusters in biosynthetic enzymes. The chain is Probable Fe(2+)-trafficking protein from Xylella fastidiosa (strain 9a5c).